The sequence spans 180 residues: Crossover junction endodeoxyribonuclease RuvC (180 aa).

Residues Asp-7, Glu-66, and Asp-138 contribute to the active site. Asp-7, Glu-66, and Asp-138 together coordinate Mg(2+).

The protein belongs to the RuvC family. In terms of assembly, homodimer which binds Holliday junction (HJ) DNA. The HJ becomes 2-fold symmetrical on binding to RuvC with unstacked arms; it has a different conformation from HJ DNA in complex with RuvA. In the full resolvosome a probable DNA-RuvA(4)-RuvB(12)-RuvC(2) complex forms which resolves the HJ. Mg(2+) is required as a cofactor.

It localises to the cytoplasm. The catalysed reaction is Endonucleolytic cleavage at a junction such as a reciprocal single-stranded crossover between two homologous DNA duplexes (Holliday junction).. Functionally, the RuvA-RuvB-RuvC complex processes Holliday junction (HJ) DNA during genetic recombination and DNA repair. Endonuclease that resolves HJ intermediates. Cleaves cruciform DNA by making single-stranded nicks across the HJ at symmetrical positions within the homologous arms, yielding a 5'-phosphate and a 3'-hydroxyl group; requires a central core of homology in the junction. The consensus cleavage sequence is 5'-(A/T)TT(C/G)-3'. Cleavage occurs on the 3'-side of the TT dinucleotide at the point of strand exchange. HJ branch migration catalyzed by RuvA-RuvB allows RuvC to scan DNA until it finds its consensus sequence, where it cleaves and resolves the cruciform DNA. In Burkholderia orbicola (strain MC0-3), this protein is Crossover junction endodeoxyribonuclease RuvC.